The primary structure comprises 167 residues: Leptin (167 aa).

The first 21 residues, 1 to 21 (MRCGPLCRFLWLWPYLSYIEA), serve as a signal peptide directing secretion. A disulfide bond links Cys-117 and Cys-167.

It belongs to the leptin family.

It localises to the secreted. Functionally, key player in the regulation of energy balance and body weight control. Once released into the circulation, has central and peripheral effects by binding LEPR, found in many tissues, which results in the activation of several major signaling pathways. In the hypothalamus, acts as an appetite-regulating factor that induces a decrease in food intake and an increase in energy consumption by inducing anorexinogenic factors and suppressing orexigenic neuropeptides, also regulates bone mass and secretion of hypothalamo-pituitary-adrenal hormones. In the periphery, increases basal metabolism, influences reproductive function, regulates pancreatic beta-cell function and insulin secretion, is pro-angiogenic for endothelial cell and affects innate and adaptive immunity. In the arcuate nucleus of the hypothalamus, activates by depolarization POMC neurons inducing FOS and SOCS3 expression to release anorexigenic peptides and inhibits by hyperpolarization NPY neurons inducing SOCS3 with a consequent reduction on release of orexigenic peptides. In addition to its known satiety inducing effect, has a modulatory role in nutrient absorption. In the intestine, reduces glucose absorption by enterocytes by activating PKC and leading to a sequential activation of p38, PI3K and ERK signaling pathways which exerts an inhibitory effect on glucose absorption. Acts as a growth factor on certain tissues, through the activation of different signaling pathways increases expression of genes involved in cell cycle regulation such as CCND1, via JAK2-STAT3 pathway, or VEGFA, via MAPK1/3 and PI3K-AKT1 pathways. May also play an apoptotic role via JAK2-STAT3 pathway and up-regulation of BIRC5 expression. Pro-angiogenic, has mitogenic activity on vascular endothelial cells and plays a role in matrix remodeling by regulating the expression of matrix metalloproteinases (MMPs) and tissue inhibitors of metalloproteinases (TIMPs). In innate immunity, modulates the activity and function of neutrophils by increasing chemotaxis and the secretion of oxygen radicals. Increases phagocytosis by macrophages and enhances secretion of pro-inflammatory mediators. Increases cytotoxic ability of NK cells. Plays a pro-inflammatory role, in synergy with IL1B, by inducing NOS2 which promotes the production of IL6, IL8 and Prostaglandin E2, through a signaling pathway that involves JAK2, PI3K, MAP2K1/MEK1 and MAPK14/p38. In adaptive immunity, promotes the switch of memory T-cells towards T helper-1 cell immune responses. Increases CD4(+)CD25(-) T-cell proliferation and reduces autophagy during TCR (T-cell receptor) stimulation, through MTOR signaling pathway activation and BCL2 up-regulation. This is Leptin (LEP) from Ursus thibetanus (Asiatic black bear).